A 780-amino-acid chain; its full sequence is Translation initiation factor IF-2 (780 aa).

Residues 24–194 are disordered; that stretch reads AEEKGFPVKN…KGAPERKNKA (171 aa). Composition is skewed to polar residues over residues 59-71 and 80-90; these read EQSA…QRKV and QGTARTQTTAQ. Composition is skewed to low complexity over residues 98 to 114 and 132 to 158; these read NQTQ…QTGN and NNNT…SRNN. Residues 159-176 show a composition bias toward basic residues; it reads RNNRRRNNNNNNRYKKNQ. Positions 177-194 are enriched in basic and acidic residues; it reads RIKDTNQHKGAPERKNKA. In terms of domain architecture, tr-type G spans 281–450; sequence PRAPVVTIMG…LLQSDVLELK (170 aa). Residues 290 to 297 are G1; it reads GHVDHGKT. 290–297 contributes to the GTP binding site; that stretch reads GHVDHGKT. Residues 315–319 form a G2 region; that stretch reads GITQA. The G3 stretch occupies residues 336–339; the sequence is DTPG. Residues 336 to 340 and 390 to 393 each bind GTP; these read DTPGH and NKID. The G4 stretch occupies residues 390 to 393; the sequence is NKID. The tract at residues 426-428 is G5; it reads SAK.

It belongs to the TRAFAC class translation factor GTPase superfamily. Classic translation factor GTPase family. IF-2 subfamily.

It is found in the cytoplasm. Its function is as follows. One of the essential components for the initiation of protein synthesis. Protects formylmethionyl-tRNA from spontaneous hydrolysis and promotes its binding to the 30S ribosomal subunits. Also involved in the hydrolysis of GTP during the formation of the 70S ribosomal complex. The sequence is that of Translation initiation factor IF-2 from Levilactobacillus brevis (strain ATCC 367 / BCRC 12310 / CIP 105137 / JCM 1170 / LMG 11437 / NCIMB 947 / NCTC 947) (Lactobacillus brevis).